A 61-amino-acid chain; its full sequence is Small ribosomal subunit protein uS14 (61 aa).

Residues C24, C27, C40, and C43 each coordinate Zn(2+).

This sequence belongs to the universal ribosomal protein uS14 family. Zinc-binding uS14 subfamily. Part of the 30S ribosomal subunit. Contacts proteins S3 and S10. Zn(2+) is required as a cofactor.

Functionally, binds 16S rRNA, required for the assembly of 30S particles and may also be responsible for determining the conformation of the 16S rRNA at the A site. This is Small ribosomal subunit protein uS14 from Desulfatibacillum aliphaticivorans.